A 64-amino-acid polypeptide reads, in one-letter code: Neurotoxin lambda-MeuTx (64 aa).

The first 18 residues, 1–18 (MSTFIVVFLLLTAILCHA), serve as a signal peptide directing secretion. The propeptide occupies 19 to 27 (EHAIDETAR). 3 cysteine pairs are disulfide-bonded: Cys29-Cys43, Cys36-Cys49, and Cys42-Cys58.

Belongs to the scorpion calcin-like family. As to expression, expressed by the venom gland.

It is found in the secreted. Functionally, voltage-gated potassium channel (Kv) inhibitor. In addition it may increase intracellular calcium release through the activation of nuclear inositol 1,4,5-trisphosphate receptors (ITPR) of cardiomyocytes, thereby causing an increase in the contraction frequency of these cells. The sequence is that of Neurotoxin lambda-MeuTx from Mesobuthus eupeus (Lesser Asian scorpion).